The following is a 146-amino-acid chain: Hemoglobin subunit beta (146 aa).

In terms of domain architecture, Globin spans 2-146 (QWTAEEKQLI…VAHALARKYH (145 aa)). Heme b-binding residues include His63 and His92.

This sequence belongs to the globin family. Heterotetramer of two alpha chains and two beta chains. As to expression, red blood cells.

Functionally, involved in oxygen transport from the lung to the various peripheral tissues. The chain is Hemoglobin subunit beta (HBB) from Passer montanus (Eurasian tree sparrow).